The chain runs to 464 residues: Argininosuccinate lyase (464 aa).

This sequence belongs to the lyase 1 family. Argininosuccinate lyase subfamily.

The protein resides in the cytoplasm. The enzyme catalyses 2-(N(omega)-L-arginino)succinate = fumarate + L-arginine. Its pathway is amino-acid biosynthesis; L-arginine biosynthesis; L-arginine from L-ornithine and carbamoyl phosphate: step 3/3. The chain is Argininosuccinate lyase from Pseudomonas savastanoi pv. phaseolicola (strain 1448A / Race 6) (Pseudomonas syringae pv. phaseolicola (strain 1448A / Race 6)).